Here is a 354-residue protein sequence, read N- to C-terminus: MTMKQFEIAAIPGDGVGKEVVAAAEKVLHTAAEVHGGLSFSFTAFPWSCDYYLEHGKMMPEDGIHTLTQFEAVFLGAVGNPKLVPDHISLWGLLLKIRRELELSINMRPAKQMAGITSPLLHPNDFDFVVIRENSEGEYSEVGGRIHRGDDEIAIQNAVFTRKATERVMRFAFELAKKRRSHVTSATKSNGIYHAMPFWDEVFQQTAADYSGIETSSQHIDALAAFFVTRPETFDVIVASNLFGDILTDISSSLMGSIGIAPSANINPSGKYPSMFEPVHGSAPDIAGQGLANPIGQIWTAKLMLDHFGEEELGAKILDVMEQVTADGIKTRDIGGQSTTAEVTDEICSRLRKL.

Mn(2+) is bound by residues aspartate 221, aspartate 245, and aspartate 249.

It belongs to the isocitrate and isopropylmalate dehydrogenases family. Mg(2+) is required as a cofactor. It depends on Mn(2+) as a cofactor. Requires K(+) as cofactor.

It carries out the reaction tartrate + NAD(+) = 2-hydroxy-3-oxosuccinate + NADH + H(+). The catalysed reaction is (2R,3S)-tartrate + NAD(+) = 2-hydroxy-3-oxosuccinate + NADH + H(+). It catalyses the reaction (2R,3R)-tartrate + NAD(+) = 2-hydroxy-3-oxosuccinate + NADH + H(+). The enzyme catalyses (2R,3R)-tartrate + H(+) = (R)-glycerate + CO2. It carries out the reaction (R)-malate + NAD(+) = pyruvate + CO2 + NADH. Its function is as follows. Has multiple catalytic activities. Apart from catalyzing the oxidation of (+)-tartrate to oxaloglycolate, also converts meso-tartrate to D-glycerate and catalyzes the oxidative decarboxylation of D-malate to pyruvate. This is Probable tartrate dehydrogenase/decarboxylase (ycsA) from Bacillus subtilis (strain 168).